The primary structure comprises 432 residues: Glial fibrillary acidic protein (432 aa).

Residues 1–72 (MERRRITSAA…KETRASERAE (72 aa)) are head. Position 7 is a phosphothreonine; by AURKB and ROCK1 (Thr7). Arg12 is subject to Omega-N-methylarginine. Ser13 carries the post-translational modification Phosphoserine; by AURKB and ROCK1. A citrulline mark is found at Arg30 and Arg36. Position 38 is a phosphoserine; by AURKB and ROCK1 (Ser38). An IF rod domain is found at 69-377 (ERAEMMELND…KLLEGEENRI (309 aa)). A coil 1A region spans residues 73–104 (MMELNDRFASYIEKVRFLEQQNKALAAELNQL). Residue Ser82 is modified to Phosphoserine. A linker 1 region spans residues 105–115 (RAKEPTKLADV). Residues Thr110 and Thr150 each carry the phosphothreonine modification. The segment at 116-214 (YQAELRELRL…EEEVRELQEQ (99 aa)) is coil 1B. Positions 215–230 (LARQQVHVELDMAKPD) are linker 12. Residues 231–252 (LTAALKEIRTQYEAMASSNMHE) are coil 2A. The interval 253 to 256 (AEEW) is linker 2. The interval 257-377 (YRSKFADLTD…KLLEGEENRI (121 aa)) is coil 2B. Position 270 is a citrulline (Arg270). Ser323 carries the post-translational modification Phosphoserine. Positions 378 to 432 (TIPVQTFSNLQIRETSLDTKSVSEGHLKRNIVVKTVEMRDGEVIKESKQEHKDVM) are tail. Thr383 carries the phosphothreonine modification. Ser385 carries the phosphoserine modification. A citrulline mark is found at Arg406 and Arg416.

The protein belongs to the intermediate filament family. As to quaternary structure, interacts with SYNM. In terms of processing, phosphorylated by PKN1.

It localises to the cytoplasm. Functionally, GFAP, a class-III intermediate filament, is a cell-specific marker that, during the development of the central nervous system, distinguishes astrocytes from other glial cells. This is Glial fibrillary acidic protein (GFAP) from Pongo abelii (Sumatran orangutan).